The sequence spans 2212 residues: Nonribosomal peptide synthetase ftmPS (2212 aa).

Residues 74 to 473 form an adenylation 1 region; sequence TYAELDSLSD…IEHHLQQTLP (400 aa). Residues 592 to 669 enclose the Carrier 1 domain; the sequence is PPSTLKETTI…EQSQRAGLIQ (78 aa). Serine 629 carries the O-(pantetheine 4'-phosphoryl)serine modification. The condensation 1 stretch occupies residues 708 to 973; that stretch reads EDIYPCTALQ…IATVPLRIRV (266 aa). Residues 1167–1564 are adenylation 2; that stretch reads TYRELWAHSS…LSAVEASLMR (398 aa). Residues 1678–1757 form the Carrier 2 domain; that stretch reads PMSDDNERRL…QFRHLITEDD (80 aa). Serine 1715 carries the O-(pantetheine 4'-phosphoryl)serine modification. Residues 1815-2070 are condensation 2; that stretch reads HFQFDLSGAI…CTNYIPYRLS (256 aa).

This sequence belongs to the NRP synthetase family.

It carries out the reaction L-proline + L-tryptophan + 2 ATP = brevianamide F + 2 AMP + 2 diphosphate + 2 H(+). It participates in mycotoxin biosynthesis. Nonribosomal peptide synthetase; part of the gene cluster that mediates the biosynthesis of fumitremorgins, indole alkaloids that carry not only intriguing chemical structures, but also interesting biological and pharmacological activities. The biosynthesis of fumitremorgin-type alkaloids begins by condensation of the two amino acids L-tryptophan and L-proline to brevianamide F, catalyzed by the non-ribosomal peptide synthetase ftmPS/ftmA. Brevianamide F is then prenylated by the prenyltransferase ftmPT1/ftmB in the presence of dimethylallyl diphosphate, resulting in the formation of tryprostatin B. The three cytochrome P450 monooxygenases, ftmP450-1/ftmC, ftmP450-2/ftmE and ftmP450-3/FtmG, are responsible for the conversion of tryprostatin B to 6-hydroxytryprostatin B, tryprostatin A to fumitremorgin C and fumitremorgin C to 12,13-dihydroxyfumitremorgin C, respectively. The putative methyltransferase ftmMT/ftmD is expected for the conversion of 6-hydroxytryprostatin B to tryprostatin A. FtmPT2/FtmH catalyzes the prenylation of 12,13-dihydroxyfumitre-morgin C in the presence of dimethylallyl diphosphate, resulting in the formation of fumitremorgin B. Fumitremorgin B is further converted to verruculogen by ftmOx1/ftmF via the insertion of an endoperoxide bond between the two prenyl moieties. Finally, verruculogen is further converted to fumitremorgin A by the verruculogen prenyltransferase ftmPT3. The polypeptide is Nonribosomal peptide synthetase ftmPS (ftmPS) (Neosartorya fischeri (strain ATCC 1020 / DSM 3700 / CBS 544.65 / FGSC A1164 / JCM 1740 / NRRL 181 / WB 181) (Aspergillus fischerianus)).